The chain runs to 321 residues: uncharacterized protein (321 aa).

The Proton donor role is filled by tyrosine 60. Histidine 118 is a binding site for substrate.

This sequence belongs to the aldo/keto reductase family.

This is an uncharacterized protein from Schizosaccharomyces pombe (strain 972 / ATCC 24843) (Fission yeast).